A 637-amino-acid polypeptide reads, in one-letter code: DNA mismatch repair protein MutL (637 aa).

Residues 343–352 (QQSPDRQVSP) are compositionally biased toward polar residues. A disordered region spans residues 343 to 411 (QQSPDRQVSP…SARNGDVSLP (69 aa)). Residues 365 to 380 (SIERKPSVSYDVRDSH) are compositionally biased toward basic and acidic residues. Positions 388 to 397 (YSSGSSSYRS) are enriched in low complexity.

Belongs to the DNA mismatch repair MutL/HexB family.

Its function is as follows. This protein is involved in the repair of mismatches in DNA. It is required for dam-dependent methyl-directed DNA mismatch repair. May act as a 'molecular matchmaker', a protein that promotes the formation of a stable complex between two or more DNA-binding proteins in an ATP-dependent manner without itself being part of a final effector complex. The polypeptide is DNA mismatch repair protein MutL (Shewanella halifaxensis (strain HAW-EB4)).